We begin with the raw amino-acid sequence, 290 residues long: ATP synthase gamma chain (290 aa).

This sequence belongs to the ATPase gamma chain family. In terms of assembly, F-type ATPases have 2 components, CF(1) - the catalytic core - and CF(0) - the membrane proton channel. CF(1) has five subunits: alpha(3), beta(3), gamma(1), delta(1), epsilon(1). CF(0) has three main subunits: a, b and c.

Its subcellular location is the cell membrane. Produces ATP from ADP in the presence of a proton gradient across the membrane. The gamma chain is believed to be important in regulating ATPase activity and the flow of protons through the CF(0) complex. This Wolbachia pipientis subsp. Culex pipiens (strain wPip) protein is ATP synthase gamma chain.